The sequence spans 313 residues: tRNA pseudouridine synthase B (313 aa).

A substrate-binding site is contributed by His44. Residue Asp49 is the Nucleophile of the active site. 3 residues coordinate substrate: Tyr77, Tyr180, and Leu201.

This sequence belongs to the pseudouridine synthase TruB family. Type 1 subfamily.

It catalyses the reaction uridine(55) in tRNA = pseudouridine(55) in tRNA. Functionally, responsible for synthesis of pseudouridine from uracil-55 in the psi GC loop of transfer RNAs. The chain is tRNA pseudouridine synthase B from Hamiltonella defensa subsp. Acyrthosiphon pisum (strain 5AT).